A 182-amino-acid chain; its full sequence is Large ribosomal subunit protein uL16 (182 aa).

This sequence belongs to the universal ribosomal protein uL16 family.

In Thermococcus onnurineus (strain NA1), this protein is Large ribosomal subunit protein uL16.